Here is a 466-residue protein sequence, read N- to C-terminus: Flagellum-specific ATP synthase (466 aa).

194–201 is a binding site for ATP; that stretch reads SSSGLGKS.

Belongs to the ATPase alpha/beta chains family.

The protein resides in the cytoplasm. The catalysed reaction is ATP + H2O + 4 H(+)(in) = ADP + phosphate + 5 H(+)(out). Functionally, probable catalytic subunit of a protein translocase for flagellum-specific export, or a proton translocase involved in local circuits at the flagellum. May be involved in a specialized protein export pathway that proceeds without signal peptide cleavage. This chain is Flagellum-specific ATP synthase (fliI), found in Buchnera aphidicola subsp. Schizaphis graminum (strain Sg).